The primary structure comprises 478 residues: NAD-dependent malic enzyme (478 aa).

The region spanning 12 to 86 (TIRLQFEKDI…GVKIVNVSDR (75 aa)) is the ACT domain. Residue Tyr114 is the Proton donor of the active site. The active-site Proton acceptor is the Lys169. The a divalent metal cation site is built by Glu211, Asp212, and Asp237. NAD(+) is bound by residues 270-273 (IGAA), Asn363, and Asn393.

This sequence belongs to the malic enzymes family. As to quaternary structure, homotetramer. Mg(2+) is required as a cofactor. Mn(2+) serves as cofactor.

The enzyme catalyses (S)-malate + NAD(+) = pyruvate + CO2 + NADH. It catalyses the reaction oxaloacetate + H(+) = pyruvate + CO2. The activity is enhanced 5-7 times by ammonium and potassium. In addition to the NAD-dependent oxidative decarboxylation of L-malate, the enzyme catalyzes the decarboxylation of oxaloacetate. This Geobacillus stearothermophilus (Bacillus stearothermophilus) protein is NAD-dependent malic enzyme.